A 171-amino-acid polypeptide reads, in one-letter code: Nucleoside-triphosphatase THEP1 (171 aa).

ATP contacts are provided by residues 8 to 15 (GPPGAGKS) and 95 to 102 (VYLIDEIG).

It belongs to the THEP1 NTPase family.

The catalysed reaction is a ribonucleoside 5'-triphosphate + H2O = a ribonucleoside 5'-diphosphate + phosphate + H(+). Its function is as follows. Has nucleotide phosphatase activity towards ATP, GTP, CTP, TTP and UTP. May hydrolyze nucleoside diphosphates with lower efficiency. The chain is Nucleoside-triphosphatase THEP1 from Ignicoccus hospitalis (strain KIN4/I / DSM 18386 / JCM 14125).